Reading from the N-terminus, the 184-residue chain is Putative manganese efflux pump MntP (184 aa).

The next 6 membrane-spanning stretches (helical) occupy residues 3 to 23, 36 to 56, 65 to 85, 103 to 123, 126 to 146, and 163 to 183; these read LLSM…ISVS, ALIS…LGWV, VSAL…LKMI, LLVL…SFAL, ISIW…SLAG, and ALGG…NVSF.

This sequence belongs to the MntP (TC 9.B.29) family.

The protein localises to the cell membrane. In terms of biological role, probably functions as a manganese efflux pump. The protein is Putative manganese efflux pump MntP of Methanothermobacter thermautotrophicus (strain ATCC 29096 / DSM 1053 / JCM 10044 / NBRC 100330 / Delta H) (Methanobacterium thermoautotrophicum).